The chain runs to 471 residues: 3-isopropylmalate dehydratase large subunit (471 aa).

Residues Cys351, Cys412, and Cys415 each coordinate [4Fe-4S] cluster.

The protein belongs to the aconitase/IPM isomerase family. LeuC type 1 subfamily. In terms of assembly, heterodimer of LeuC and LeuD. [4Fe-4S] cluster serves as cofactor.

The enzyme catalyses (2R,3S)-3-isopropylmalate = (2S)-2-isopropylmalate. It functions in the pathway amino-acid biosynthesis; L-leucine biosynthesis; L-leucine from 3-methyl-2-oxobutanoate: step 2/4. Catalyzes the isomerization between 2-isopropylmalate and 3-isopropylmalate, via the formation of 2-isopropylmaleate. The chain is 3-isopropylmalate dehydratase large subunit from Hahella chejuensis (strain KCTC 2396).